The primary structure comprises 400 residues: Elongation factor Tu (400 aa).

The tr-type G domain maps to 10 to 209 (KEHVNIGTIG…QVDNWIDAPL (200 aa)). The segment at 19–26 (GHVDHGKT) is G1. Residue 19 to 26 (GHVDHGKT) coordinates GTP. Thr-26 serves as a coordination point for Mg(2+). Residues 61–65 (GITIN) form a G2 region. A G3 region spans residues 82–85 (DCPG). GTP is bound by residues 82 to 86 (DCPGH) and 137 to 140 (NKVD). The G4 stretch occupies residues 137–140 (NKVD). Positions 179–181 (SAL) are G5.

This sequence belongs to the TRAFAC class translation factor GTPase superfamily. Classic translation factor GTPase family. EF-Tu/EF-1A subfamily. As to quaternary structure, monomer.

The protein resides in the cytoplasm. The enzyme catalyses GTP + H2O = GDP + phosphate + H(+). Its function is as follows. GTP hydrolase that promotes the GTP-dependent binding of aminoacyl-tRNA to the A-site of ribosomes during protein biosynthesis. This chain is Elongation factor Tu, found in Mycoplasma mobile (strain ATCC 43663 / 163K / NCTC 11711) (Mesomycoplasma mobile).